We begin with the raw amino-acid sequence, 406 residues long: Arginine biosynthesis bifunctional protein ArgJ (406 aa).

Substrate contacts are provided by Thr156, Lys182, Thr193, Glu279, Asn401, and Thr406. The Nucleophile role is filled by Thr193.

The protein belongs to the ArgJ family. As to quaternary structure, heterotetramer of two alpha and two beta chains.

The protein resides in the cytoplasm. The enzyme catalyses N(2)-acetyl-L-ornithine + L-glutamate = N-acetyl-L-glutamate + L-ornithine. The catalysed reaction is L-glutamate + acetyl-CoA = N-acetyl-L-glutamate + CoA + H(+). It functions in the pathway amino-acid biosynthesis; L-arginine biosynthesis; L-ornithine and N-acetyl-L-glutamate from L-glutamate and N(2)-acetyl-L-ornithine (cyclic): step 1/1. It participates in amino-acid biosynthesis; L-arginine biosynthesis; N(2)-acetyl-L-ornithine from L-glutamate: step 1/4. Feedback inhibition by L-arginine. Functionally, catalyzes two activities which are involved in the cyclic version of arginine biosynthesis: the synthesis of N-acetylglutamate from glutamate and acetyl-CoA as the acetyl donor, and of ornithine by transacetylation between N(2)-acetylornithine and glutamate. The polypeptide is Arginine biosynthesis bifunctional protein ArgJ (Bacillus amyloliquefaciens (Bacillus velezensis)).